We begin with the raw amino-acid sequence, 783 residues long: Polyribonucleotide nucleotidyltransferase 1, mitochondrial (783 aa).

Residues 1-46 constitute a mitochondrion transit peptide; the sequence is MAACRYCCSCLRLRPLSDGPFCLPGRDRALTQLLVRALWSSTGSRA. 4 positions are modified to N6-acetyllysine: K250, K264, K285, and K289. K552 carries the post-translational modification N6-succinyllysine. A KH domain is found at 605-664; it reads PVVETVQVPLSKRAKFVGPGGYNLKKLQAETGVTISQVDEETFSVFAPTPSALHEARDFI. One can recognise an S1 motif domain in the interval 679–750; the sequence is GAVYTATITE…ADGRMRLSRK (72 aa). A phosphoserine mark is found at S754 and S782.

The protein belongs to the polyribonucleotide nucleotidyltransferase family. Homotrimer; in free form. Homooligomer. Component of the mitochondrial degradosome (mtEXO) complex which is a heteropentamer containing 2 copies of SUPV3L1 and 3 copies of PNPT1. As part of the mitochondrial degradosome complex, interacts with GRSF1 in an RNA-dependent manner; the interaction enhances the activity of the complex. Interacts with TCL1A; the interaction has no effect on PNPT1 exonuclease activity.

It is found in the cytoplasm. The protein resides in the mitochondrion matrix. Its subcellular location is the mitochondrion intermembrane space. The enzyme catalyses RNA(n+1) + phosphate = RNA(n) + a ribonucleoside 5'-diphosphate. RNA-binding protein implicated in numerous RNA metabolic processes. Catalyzes the phosphorolysis of single-stranded polyribonucleotides processively in the 3'-to-5' direction. Mitochondrial intermembrane factor with RNA-processing exoribonulease activity. Component of the mitochondrial degradosome (mtEXO) complex, that degrades 3' overhang double-stranded RNA with a 3'-to-5' directionality in an ATP-dependent manner. Involved in the degradation of non-coding mitochondrial transcripts (MT-ncRNA) and tRNA-like molecules. Required for correct processing and polyadenylation of mitochondrial mRNAs. Plays a role as a cytoplasmic RNA import factor that mediates the translocation of small RNA components like the 5S RNA, the RNA subunit of ribonuclease P and the mitochondrial RNA-processing (MRP) RNA, into the mitochondrial matrix. Plays a role in mitochondrial morphogenesis and respiration; regulates the expression of the electron transport chain (ETC) components at the mRNA and protein levels. In the cytoplasm, shows a 3'-to-5' exoribonuclease mediating mRNA degradation activity; degrades c-myc mRNA upon treatment with IFNB1/IFN-beta, resulting in a growth arrest in melanoma cells. Regulates the stability of specific mature miRNAs in melanoma cells; specifically and selectively degrades miR-221, preferentially. Also plays a role in RNA cell surveillance by cleaning up oxidized RNAs. Binds to the RNA subunit of ribonuclease P, MRP RNA and miR-221 microRNA. This is Polyribonucleotide nucleotidyltransferase 1, mitochondrial (PNPT1) from Pongo abelii (Sumatran orangutan).